Consider the following 847-residue polypeptide: B-cell receptor CD22 (847 aa).

An N-terminal signal peptide occupies residues 1 to 19 (MHLLGPWLLLLVLEYLAFS). The region spanning 20 to 138 (DSSKWAFEHP…MERIHLNVSE (119 aa)) is the Ig-like V-type domain. Over 20 to 687 (DSSKWAFEHP…YYSPETIGRR (668 aa)) the chain is Extracellular. Residues N67, N101, and N112 are each glycosylated (N-linked (GlcNAc...) asparagine). N-acetylneuraminate is bound at residue R120. N-linked (GlcNAc...) asparagine glycosylation is found at N135, N164, and N231. Ig-like C2-type domains follow at residues 143 to 235 (PHIQ…DTVQ), 242 to 326 (PKLE…VFLQ), 331 to 416 (PEPS…LDVQ), 419 to 500 (PKKV…VALN), 505 to 582 (PRDV…QTAS), and 593 to 676 (PRRL…STLT). Cysteines 161 and 219 form a disulfide. 2 disulfide bridges follow: C265–C309 and C353–C396. N-linked (GlcNAc...) asparagine glycosylation is found at N363, N428, N445, N448, and N479. 2 cysteine pairs are disulfide-bonded: C442–C484 and C529–C571. N-linked (GlcNAc...) asparagine glycosylation is found at N574 and N634. A disulfide bond links C616 and C659. A helical membrane pass occupies residues 688-708 (VAVGFGSCLAILILAICGLKL). Over 709–847 (QRRWKRTQSQ…ENVDYVILKH (139 aa)) the chain is Cytoplasmic. Residues S725, S726, and S729 each carry the phosphoserine modification. 2 short sequence motifs (ITIM motif) span residues 760 to 765 (ISYTTL) and 794 to 799 (VTYSVL). At Y762 the chain carries Phosphotyrosine. 3 positions are modified to phosphotyrosine: Y807, Y822, and Y842. Short sequence motifs (ITIM motif) lie at residues 820-825 (IHYSEL) and 840-845 (VDYVIL).

It belongs to the immunoglobulin superfamily. SIGLEC (sialic acid binding Ig-like lectin) family. As to quaternary structure, predominantly monomer of isoform CD22-beta. Also found as heterodimer of isoform CD22-beta and a shorter isoform. Interacts with PTPN6/SHP-1, LYN, SYK, PIK3R1/PIK3R2 and PLCG1 upon phosphorylation. Interacts with GRB2, INPP5D and SHC1 upon phosphorylation. May form a complex with INPP5D/SHIP, GRB2 and SHC1. Phosphorylation of Tyr-762, Tyr-807 and Tyr-822 are involved in binding to SYK, GRB2 and SYK, respectively. Phosphorylation of Tyr-842 is involved in binding to SYK, PLCG2 and PIK3R1/PIK3R2. In terms of processing, phosphorylated on tyrosine residues by LYN.

The protein resides in the cell membrane. Its function is as follows. Most highly expressed siglec (sialic acid-binding immunoglobulin-like lectin) on B-cells that plays a role in various aspects of B-cell biology including differentiation, antigen presentation, and trafficking to bone marrow. Binds to alpha 2,6-linked sialic acid residues of surface molecules such as CD22 itself, CD45 and IgM in a cis configuration. Can also bind to ligands on other cells as an adhesion molecule in a trans configuration. Acts as an inhibitory coreceptor on the surface of B-cells and inhibits B-cell receptor induced signaling, characterized by inhibition of the calcium mobilization and cellular activation. Mechanistically, the immunoreceptor tyrosine-based inhibitory motif domain is phosphorylated by the Src kinase LYN, which in turn leads to the recruitment of the protein tyrosine phosphatase 1/PTPN6, leading to the negative regulation of BCR signaling. If this negative signaling from is of sufficient strength, apoptosis of the B-cell can be induced. This Pan paniscus (Pygmy chimpanzee) protein is B-cell receptor CD22.